Consider the following 74-residue polypeptide: Conotoxin Cal27 (74 aa).

A signal peptide spans 1 to 19 (MSGTGVLLLTLLLLVAMAA).

Post-translationally, may contain 4 disulfide bonds. In terms of tissue distribution, expressed by the venom duct.

Its subcellular location is the secreted. In terms of biological role, probable neurotoxin. The polypeptide is Conotoxin Cal27 (Californiconus californicus (California cone)).